The chain runs to 192 residues: Protein hunchback (192 aa).

2 disordered regions span residues 16-54 (SHHH…SNTN) and 152-192 (LTPP…KYMA). Over residues 17 to 28 (HHHHHHHAHHSH) the composition is skewed to basic residues. Residues 32-41 (SNSNASSPHQ) show a composition bias toward low complexity. Over residues 173–192 (EPEKEHDLMSNSSEDMKYMA) the composition is skewed to basic and acidic residues.

The protein belongs to the hunchback C2H2-type zinc-finger protein family.

The protein localises to the nucleus. Its function is as follows. Gap class segmentation protein that controls development of head structures. In Drosophila tanythrix (Fruit fly), this protein is Protein hunchback (hb).